The chain runs to 364 residues: Putative zinc metalloprotease all3971 (364 aa).

H17 provides a ligand contact to Zn(2+). The active site involves E18. H21 lines the Zn(2+) pocket. The next 3 membrane-spanning stretches (helical) occupy residues 92–114, 281–303, and 329–346; these read AIVISAGVIANLIFAYMLLLAQV, LFFFAALISINLAVINILPLPAL, and VMQTGLVLLLGLGIFLIV. Residues 103–188 form the PDZ domain; it reads LIFAYMLLLA…KSIQLTVARG (86 aa).

The protein belongs to the peptidase M50B family. The cofactor is Zn(2+).

It is found in the cell inner membrane. The chain is Putative zinc metalloprotease all3971 from Nostoc sp. (strain PCC 7120 / SAG 25.82 / UTEX 2576).